Reading from the N-terminus, the 384-residue chain is UDP-4-amino-4-deoxy-L-arabinose--oxoglutarate aminotransferase (384 aa).

Lysine 182 is modified (N6-(pyridoxal phosphate)lysine).

It belongs to the DegT/DnrJ/EryC1 family. ArnB subfamily. As to quaternary structure, homodimer. It depends on pyridoxal 5'-phosphate as a cofactor.

The catalysed reaction is UDP-4-amino-4-deoxy-beta-L-arabinose + 2-oxoglutarate = UDP-beta-L-threo-pentopyranos-4-ulose + L-glutamate. The protein operates within nucleotide-sugar biosynthesis; UDP-4-deoxy-4-formamido-beta-L-arabinose biosynthesis; UDP-4-deoxy-4-formamido-beta-L-arabinose from UDP-alpha-D-glucuronate: step 2/3. Its pathway is bacterial outer membrane biogenesis; lipopolysaccharide biosynthesis. In terms of biological role, catalyzes the conversion of UDP-4-keto-arabinose (UDP-Ara4O) to UDP-4-amino-4-deoxy-L-arabinose (UDP-L-Ara4N). The modified arabinose is attached to lipid A and is required for resistance to polymyxin and cationic antimicrobial peptides. The sequence is that of UDP-4-amino-4-deoxy-L-arabinose--oxoglutarate aminotransferase from Yersinia pseudotuberculosis serotype O:1b (strain IP 31758).